A 293-amino-acid polypeptide reads, in one-letter code: SAGA-associated factor 29 (293 aa).

The stretch at 3–88 (LVSADSRIAE…KALDKIAEIK (86 aa)) forms a coiled coil. The SGF29 C-terminal domain maps to 152–293 (GDYVAKPGDK…VVACKEPKKK (142 aa)). 2 histone H3K4me3 N-terminus binding regions span residues 194-196 (DID) and 240-243 (QTTC). Residues 264–266 (FED) are histone H3K4me3 binding. Lys288 is subject to N6-acetyllysine.

It belongs to the SGF29 family. As to quaternary structure, interacts with dimethylated and trimethylated 'Lys-4' of histone H3 (H3K4me2 and H3K4me3), with a preference for the trimethylated form (H3K4me3). Component of some SAGA-type complexes. Component of the ADA2A-containing complex (ATAC), composed of KAT14, KAT2A, TADA2L, TADA3L, ZZ3, MBIP, WDR5, YEATS2, CCDC101 and DR1. Interacts with (methylated) CGAS. Interacts with TADA3L, GCN5L2, SUPT3H and MYC. Widely expressed with highest levels in testis. Highly expressed in hepatoma and other tumor cell lines.

Its subcellular location is the nucleus. Chromatin reader component of some histone acetyltransferase (HAT) SAGA-type complexes like the TFTC-HAT, ATAC or STAGA complexes. SGF29 specifically recognizes and binds methylated 'Lys-4' of histone H3 (H3K4me), with a preference for trimethylated form (H3K4me3). In the SAGA-type complexes, SGF29 is required to recruit complexes to H3K4me. Involved in the response to endoplasmic reticulum (ER) stress by recruiting the SAGA complex to H3K4me, thereby promoting histone H3 acetylation and cell survival. Also binds non-histone proteins that are methylated on Lys residues: specifically recognizes and binds CGAS monomethylated on 'Lys-491'. May be involved in MYC-mediated oncogenic transformation. The sequence is that of SAGA-associated factor 29 from Rattus norvegicus (Rat).